A 365-amino-acid polypeptide reads, in one-letter code: Histidinol-phosphate aminotransferase (365 aa).

Lysine 221 is subject to N6-(pyridoxal phosphate)lysine.

This sequence belongs to the class-II pyridoxal-phosphate-dependent aminotransferase family. Histidinol-phosphate aminotransferase subfamily. As to quaternary structure, homodimer. Requires pyridoxal 5'-phosphate as cofactor.

It carries out the reaction L-histidinol phosphate + 2-oxoglutarate = 3-(imidazol-4-yl)-2-oxopropyl phosphate + L-glutamate. It functions in the pathway amino-acid biosynthesis; L-histidine biosynthesis; L-histidine from 5-phospho-alpha-D-ribose 1-diphosphate: step 7/9. The chain is Histidinol-phosphate aminotransferase from Rhodopseudomonas palustris (strain HaA2).